The sequence spans 36 residues: Photosystem I reaction center subunit VIII (36 aa).

A helical membrane pass occupies residues 9–29 (ISVPLVGLVFPAITMVLSFIY).

This sequence belongs to the PsaI family.

It is found in the plastid. The protein resides in the chloroplast thylakoid membrane. In terms of biological role, may help in the organization of the PsaL subunit. The protein is Photosystem I reaction center subunit VIII of Huperzia lucidula (Shining clubmoss).